The following is a 130-amino-acid chain: Small ribosomal subunit protein uS11c (130 aa).

This sequence belongs to the universal ribosomal protein uS11 family. In terms of assembly, part of the 30S ribosomal subunit.

The protein localises to the plastid. It localises to the chloroplast. The protein is Small ribosomal subunit protein uS11c of Tupiella akineta (Green alga).